Reading from the N-terminus, the 336-residue chain is Ketol-acid reductoisomerase (NADP(+)) (336 aa).

The 181-residue stretch at 1–181 (MKVYYDQDAD…GGGRSGIIET (181 aa)) folds into the KARI N-terminal Rossmann domain. Residues 24-27 (YGSQ), Arg47, Ser50, and Ser52 contribute to the NADP(+) site. His107 is a catalytic residue. NADP(+) is bound at residue Gly133. The KARI C-terminal knotted domain occupies 182-327 (SFREETETDL…ERLRGMMPWI (146 aa)). Residues Asp190, Glu194, Glu226, and Glu230 each contribute to the Mg(2+) site. Ser251 is a binding site for substrate.

The protein belongs to the ketol-acid reductoisomerase family. Requires Mg(2+) as cofactor.

It carries out the reaction (2R)-2,3-dihydroxy-3-methylbutanoate + NADP(+) = (2S)-2-acetolactate + NADPH + H(+). It catalyses the reaction (2R,3R)-2,3-dihydroxy-3-methylpentanoate + NADP(+) = (S)-2-ethyl-2-hydroxy-3-oxobutanoate + NADPH + H(+). Its pathway is amino-acid biosynthesis; L-isoleucine biosynthesis; L-isoleucine from 2-oxobutanoate: step 2/4. It functions in the pathway amino-acid biosynthesis; L-valine biosynthesis; L-valine from pyruvate: step 2/4. Functionally, involved in the biosynthesis of branched-chain amino acids (BCAA). Catalyzes an alkyl-migration followed by a ketol-acid reduction of (S)-2-acetolactate (S2AL) to yield (R)-2,3-dihydroxy-isovalerate. In the isomerase reaction, S2AL is rearranged via a Mg-dependent methyl migration to produce 3-hydroxy-3-methyl-2-ketobutyrate (HMKB). In the reductase reaction, this 2-ketoacid undergoes a metal-dependent reduction by NADPH to yield (R)-2,3-dihydroxy-isovalerate. The chain is Ketol-acid reductoisomerase (NADP(+)) from Halorhodospira halophila (strain DSM 244 / SL1) (Ectothiorhodospira halophila (strain DSM 244 / SL1)).